The primary structure comprises 141 residues: Nucleoside diphosphate kinase (141 aa).

Residues Lys-11, Phe-59, Arg-87, Thr-93, Arg-104, and Asn-114 each contribute to the ATP site. His-117 functions as the Pros-phosphohistidine intermediate in the catalytic mechanism.

Belongs to the NDK family. Homotetramer. The cofactor is Mg(2+).

Its subcellular location is the cytoplasm. It carries out the reaction a 2'-deoxyribonucleoside 5'-diphosphate + ATP = a 2'-deoxyribonucleoside 5'-triphosphate + ADP. The catalysed reaction is a ribonucleoside 5'-diphosphate + ATP = a ribonucleoside 5'-triphosphate + ADP. In terms of biological role, major role in the synthesis of nucleoside triphosphates other than ATP. The ATP gamma phosphate is transferred to the NDP beta phosphate via a ping-pong mechanism, using a phosphorylated active-site intermediate. The polypeptide is Nucleoside diphosphate kinase (Bordetella petrii (strain ATCC BAA-461 / DSM 12804 / CCUG 43448)).